Consider the following 367-residue polypeptide: Glutamate 5-kinase (367 aa).

K10 contacts ATP. Residues S50, D137, and N149 each coordinate substrate. Residues 169–170 (TD) and 211–217 (TGGMSTK) each bind ATP. The PUA domain maps to 275–353 (AGEITVDEGA…QEIDAILGYE (79 aa)).

It belongs to the glutamate 5-kinase family.

Its subcellular location is the cytoplasm. The enzyme catalyses L-glutamate + ATP = L-glutamyl 5-phosphate + ADP. Its pathway is amino-acid biosynthesis; L-proline biosynthesis; L-glutamate 5-semialdehyde from L-glutamate: step 1/2. Catalyzes the transfer of a phosphate group to glutamate to form L-glutamate 5-phosphate. The chain is Glutamate 5-kinase from Shigella flexneri.